The sequence spans 177 residues: Ribosome maturation factor RimM (177 aa).

Positions 101-174 (EGEFHLLDLV…WLLLTPPPGL (74 aa)) constitute a PRC barrel domain.

It belongs to the RimM family. As to quaternary structure, binds ribosomal protein uS19.

It localises to the cytoplasm. In terms of biological role, an accessory protein needed during the final step in the assembly of 30S ribosomal subunit, possibly for assembly of the head region. Essential for efficient processing of 16S rRNA. May be needed both before and after RbfA during the maturation of 16S rRNA. It has affinity for free ribosomal 30S subunits but not for 70S ribosomes. The sequence is that of Ribosome maturation factor RimM from Synechococcus sp. (strain CC9605).